Reading from the N-terminus, the 120-residue chain is UPF0145 protein Bcenmc03_5217 (120 aa).

Belongs to the UPF0145 family.

The chain is UPF0145 protein Bcenmc03_5217 from Burkholderia orbicola (strain MC0-3).